The sequence spans 496 residues: Pup--protein ligase (496 aa).

Residue Glu30 participates in Mg(2+) binding. Position 73 (Arg73) interacts with ATP. Tyr75 serves as a coordination point for Mg(2+). The active-site Proton acceptor is Asp77. Glu83 is a binding site for Mg(2+). ATP contacts are provided by Thr86 and Trp450.

The protein belongs to the Pup ligase/Pup deamidase family. Pup-conjugating enzyme subfamily.

The catalysed reaction is ATP + [prokaryotic ubiquitin-like protein]-L-glutamate + [protein]-L-lysine = ADP + phosphate + N(6)-([prokaryotic ubiquitin-like protein]-gamma-L-glutamyl)-[protein]-L-lysine.. Its pathway is protein degradation; proteasomal Pup-dependent pathway. It functions in the pathway protein modification; protein pupylation. In terms of biological role, catalyzes the covalent attachment of the prokaryotic ubiquitin-like protein modifier Pup to the proteasomal substrate proteins, thereby targeting them for proteasomal degradation. This tagging system is termed pupylation. The ligation reaction involves the side-chain carboxylate of the C-terminal glutamate of Pup and the side-chain amino group of a substrate lysine. The chain is Pup--protein ligase from Bifidobacterium animalis subsp. lactis (strain AD011).